We begin with the raw amino-acid sequence, 86 residues long: Large ribosomal subunit protein bL27c (86 aa).

The segment at 1–27 is disordered; it reads MAHKKGSGSTRNGRDSNSKRLGVKKYG.

This sequence belongs to the bacterial ribosomal protein bL27 family.

It localises to the plastid. Its subcellular location is the chloroplast. This chain is Large ribosomal subunit protein bL27c (rpl27), found in Porphyra purpurea (Red seaweed).